A 597-amino-acid polypeptide reads, in one-letter code: uncharacterized protein (597 aa).

Disordered regions lie at residues 165 to 197 (NSRA…IFSK) and 278 to 344 (ERSS…RGTL). Positions 169–178 (VPPPAPPNPP) are enriched in pro residues. Over residues 179-189 (KMEKHMSHDTS) the composition is skewed to basic and acidic residues. Residues 293 to 313 (STEVSITSSSPSPSSSSSTST) show a composition bias toward low complexity. One can recognise an SAM domain in the interval 402–465 (WSLDDVLLWL…LDDLSKIIEN (64 aa)). The interval 576–597 (EESQQKESSSSGISSSPQTPTE) is disordered. Positions 581 to 597 (KESSSSGISSSPQTPTE) are enriched in low complexity.

This is an uncharacterized protein from Caenorhabditis elegans.